Consider the following 235-residue polypeptide: Ubiquitin-like-conjugating enzyme ATG10 (235 aa).

Cysteine 196 (glycyl thioester intermediate) is an active-site residue.

It belongs to the ATG10 family. As to quaternary structure, forms homooligomers. Interacts with ATG7 and ATG12.

The protein localises to the preautophagosomal structure membrane. Its function is as follows. E2-like enzyme required for the cytoplasm to vacuole transport (Cvt), autophagy and nucleophagy. Acts as an E2-like enzyme that catalyzes the conjugation of ATG12 to ATG5. ATG12 conjugation to ATG5 is required for proper localization of ATG8 to the preautophagosomal structure (PAS). Likely serves as an ATG5-recognition molecule. Autophagy is required for proper vegetative growth, asexual/sexual reproduction, and full virulence. Autophagy is particularly involved in the biosynthesis of deoxynivalenol (DON), an important virulence determinant. The chain is Ubiquitin-like-conjugating enzyme ATG10 from Gibberella zeae (strain ATCC MYA-4620 / CBS 123657 / FGSC 9075 / NRRL 31084 / PH-1) (Wheat head blight fungus).